Consider the following 780-residue polypeptide: Cullin-5 (780 aa).

Position 34 is a phosphoserine (Ser34). Phosphothreonine is present on Thr210. Residues 711–772 enclose the Cullin neddylation domain; the sequence is RILRTQEAII…HRYIRRDEAD (62 aa). Lys724 is covalently cross-linked (Glycyl lysine isopeptide (Lys-Gly) (interchain with G-Cter in NEDD8)).

The protein belongs to the cullin family. Component of multiple cullin-5-RING E3 ubiquitin-protein ligase complexes (ECS complexes, also named CRL5 complexes) formed of CUL5, Elongin BC (ELOB and ELOC), RNF7/RBX2 and a variable SOCS box domain-containing protein as substrate-specific recognition component. CUL5-containing ECS complexes specifically contain RNF7/RBX2, and not RBX1, as catalytic subunit. Component of the ECS(ASB2) complex with the substrate recognition component ASB2. Component of the ECS(ASB6) complex with the substrate recognition component ASB6. Component of the ECS(ASB7) complex with the substrate recognition component ASB7. Component of the ECS(ASB9) complex with the substrate recognition component ASB9. Component of the ECS(ASB11) complex with the substrate recognition component ASB11. Component of the ECS(ASB12) complex with the substrate recognition component ASB12. Component of the ECS(LRRC41) complex with the substrate recognition component LRRC41. Component of the ECS(SOCS1) complex with the substrate recognition component SOCS1. Component of the ECS(SOCS2) complex with the substrate recognition component SOCS2. Component of the ECS(WSB1) complex with the substrate recognition subunit WSB1. Component of the ECS(SOCS3) complex with the substrate recognition component SOCS3. Component of the ECS(SOCS7) complex with the substrate recognition component SOCS7. Component of the ECS(SPSB1) complex with the substrate recognition component SPSB1. Component of the ECS(SPSB3) complex with the substrate recognition component SPSB3. Component of the ECS(SPSB2) complex with the substrate recognition component SPSB2. Component of the ECS(SPSB4) complex with the substrate recognition component SPSB4. Component of the ECS(RAB40) complex with the substrate recognition subunit RAB40A, RAB40B or RAB40C. Component of the ECS(KLHDC1) complex with the substrate recognition component KLHDC1. Component of the ECS(PCMTD1) complex with the substrate recognition subunit PCMTD1. May also form complexes containing RBX1 and ELOA or VHL; additional evidence is however required to confirm this result in vivo. Interacts (when neddylated) with ARIH2; leading to activate the E3 ligase activity of ARIH2. Interacts with ERCC6; the interaction is induced by DNA damaging agents or inhibitors of RNA polymerase II elongation. Interacts with ELOA (via the BC-box). Interacts (unneddylated form) with DCUN1D1, DCUN1D2, DCUN1D3, DCUN1D4 and DCUN1D5; these interactions promote the cullin neddylation. Neddylated; which enhances the ubiquitination activity of ECS complexes and prevents binding of the inhibitor CAND1. Deneddylated via its interaction with the COP9 signalosome (CSN).

It is found in the nucleus. It participates in protein modification; protein ubiquitination. In terms of biological role, core component of multiple cullin-5-RING E3 ubiquitin-protein ligase complexes (ECS complexes, also named CRL5 complexes), which mediate the ubiquitination and subsequent proteasomal degradation of target proteins. Acts a scaffold protein that contributes to catalysis through positioning of the substrate and the ubiquitin-conjugating enzyme. The functional specificity of the E3 ubiquitin-protein ligase complex depends on the variable SOCS box-containing substrate recognition component. Acts as a key regulator of neuron positioning during cortex development: component of various SOCS-containing ECS complexes, such as the ECS(SOCS7) complex, that regulate reelin signaling by mediating ubiquitination and degradation of DAB1. ECS(SOCS1) seems to direct ubiquitination of JAK2. The ECS(SOCS2) complex mediates the ubiquitination and subsequent proteasomal degradation of phosphorylated EPOR and GHR. The ECS(SPSB3) complex catalyzes ubiquitination of nuclear CGAS. ECS(KLHDC1) complex is part of the DesCEND (destruction via C-end degrons) pathway and mediates ubiquitination and degradation of truncated SELENOS selenoprotein produced by failed UGA/Sec decoding, which ends with a glycine. The ECS(ASB9) complex mediates ubiquitination and degradation of CKB. As part of some ECS complex, promotes 'Lys-11'-linked ubiquitination and degradation of BTRC. As part of a multisubunit ECS complex, polyubiquitinates monoubiquitinated POLR2A. As part of the ECS(RAB40C) complex, mediates ANKRD28 ubiquitination and degradation, thereby regulating protein phosphatase 6 (PP6) complex activity and focal adhesion assembly during cell migration. As part of the ECS(RAB40A) complex, mediates RHOU 'Lys-48'-linked ubiquitination and degradation, thus inhibiting focal adhesion disassembly during cell migration. As part of the ECS(RAB40B) complex, mediates LIMA1/EPLIN and RAP2 ubiquitination, thereby regulating actin cytoskeleton dynamics and stress fiber formation during cell migration. May form a cell surface vasopressin receptor. The sequence is that of Cullin-5 from Mus musculus (Mouse).